Consider the following 578-residue polypeptide: Isocitrate dehydrogenase kinase/phosphatase (578 aa).

ATP contacts are provided by residues 315–321 (APGIRGM) and lysine 336. Aspartate 371 is a catalytic residue.

The protein belongs to the AceK family.

The protein resides in the cytoplasm. It carries out the reaction L-seryl-[isocitrate dehydrogenase] + ATP = O-phospho-L-seryl-[isocitrate dehydrogenase] + ADP + H(+). Its function is as follows. Bifunctional enzyme which can phosphorylate or dephosphorylate isocitrate dehydrogenase (IDH) on a specific serine residue. This is a regulatory mechanism which enables bacteria to bypass the Krebs cycle via the glyoxylate shunt in response to the source of carbon. When bacteria are grown on glucose, IDH is fully active and unphosphorylated, but when grown on acetate or ethanol, the activity of IDH declines drastically concomitant with its phosphorylation. This Escherichia coli O157:H7 protein is Isocitrate dehydrogenase kinase/phosphatase.